Here is a 316-residue protein sequence, read N- to C-terminus: Very-long-chain 3-oxooacyl-coA reductase let-767 (316 aa).

NADP(+) contacts are provided by residues A47–L76 and D106. Residue S189 participates in substrate binding. The Proton acceptor role is filled by Y202. K206 contacts NADP(+).

This sequence belongs to the short-chain dehydrogenases/reductases (SDR) family. 17-beta-HSD 3 subfamily. As to expression, expressed in the gut of larva and adult.

The catalysed reaction is a very-long-chain (3R)-3-hydroxyacyl-CoA + NADP(+) = a very-long-chain 3-oxoacyl-CoA + NADPH + H(+). It carries out the reaction (omega-1)-methyl-(3R)-hydroxy-fatty acyl-CoA + NADP(+) = (omega-1)-methyl-3-oxo-fatty acyl-CoA + NADPH + H(+). The enzyme catalyses a 17beta-hydroxy steroid + NADP(+) = a 17-oxo steroid + NADPH + H(+). The protein operates within lipid metabolism; fatty acid biosynthesis. Its function is as follows. Required for branched-chain fatty acid synthesis (such as (omega-1)-methyl-fatty acids). Catalyzes the reduction of the 3-keto-fatty acyl-CoA intermediate that is formed in each cycle of fatty acid elongation. Very long-chain fatty acids (VLCFAs) serve as precursors for ceramide and sphingolipids. Involved in hormone production as it metabolizes 4-androstendione (androst-4-ene-3,17-dione) into testosterone and estrone into estradiol (17beta-estradiol) in vitro, but the physiological steroid substrate is unknown. This is Very-long-chain 3-oxooacyl-coA reductase let-767 (let-767) from Caenorhabditis elegans.